A 98-amino-acid chain; its full sequence is uncharacterized protein (98 aa).

It belongs to the HesB/IscA family.

This is an uncharacterized protein from Staphylococcus aureus (strain MRSA252).